The primary structure comprises 397 residues: Odorant receptor 59a (397 aa).

Residues 1–36 (MAEVRVDSLEFFKSHWTAWRYLGVAHFRVENWKNLY) are Cytoplasmic-facing. A helical transmembrane segment spans residues 37-57 (VFYSIVSNLLVTLCYPVHLGI). Residues 58–68 (SLFRNRTITED) are Extracellular-facing. N-linked (GlcNAc...) asparagine glycosylation is present at Asn-62. The chain crosses the membrane as a helical span at residues 69 to 92 (ILNLTTFATCTACSVKCLLYAYNI). Residues 93 to 128 (KDVLEMERLLRLLDERVVGPEQRSIYGQVRVQLRNV) are Cytoplasmic-facing. The helical transmembrane segment at 129 to 149 (LYVFIGIYMPCALFAELSFLF) threads the bilayer. At 150-179 (KEERGLMYPAWFPFDWLHSTRNYYIANAYQ) the chain is on the extracellular side. The chain crosses the membrane as a helical span at residues 180–200 (IVGISFQLLQNYVSDCFPAVV). Topologically, residues 201–274 (LCLISSHIKM…IEAFISLPML (74 aa)) are cytoplasmic. A helical membrane pass occupies residues 275–295 (IQFTVTALNVCIGLAALVFFV). Residues 296–301 (SEPMAR) are Extracellular-facing. A helical transmembrane segment spans residues 302-322 (MYFIFYSLAMPLQIFPSCFFG). The Cytoplasmic segment spans residues 323–372 (TDNEYWFGRLHYAAFSCNWHTQNRSFKRKMMLFVEQSLKKSTAVAGGMMR). Residues 373–393 (IHLDTFFSTLKGAYSLFTIII) traverse the membrane as a helical segment. Residues 394–397 (RMRK) are Extracellular-facing.

The protein belongs to the insect chemoreceptor superfamily. Heteromeric odorant receptor channel (TC 1.A.69) family. Or2a subfamily. In terms of assembly, interacts with Orco. Complexes exist early in the endomembrane system in olfactory sensory neurons (OSNs), coupling these complexes to the conserved ciliary trafficking pathway. Expressed in neurons of the third antennal segment.

It localises to the cell membrane. Functionally, odorant receptor which mediates acceptance or avoidance behavior, depending on its substrates. The odorant receptor repertoire encodes a large collection of odor stimuli that vary widely in identity, intensity, and duration. May form a complex with Orco to form odorant-sensing units, providing sensitive and prolonged odorant signaling and calcium permeability. Involved in the behavioral responses to ethyl acetate, anisole, hexanoic acid, and pyrazines. The protein is Odorant receptor 59a (Or59a) of Drosophila melanogaster (Fruit fly).